The primary structure comprises 459 residues: MTSPALNFITFNQDHSCLAVGTSKGFRIYHTDPFSRIFSSDDGNIAIIEMLFSTSLVALILSPRHLIIQNTKRASTICELTFPSAVLAVRLNRKRLAVVLEEEIYLYDISNMSLLHTIATSPNPSAICALSPSSENCFIAYPLPKPREDPDANRPAHAPPQSTFVAPTSGEVLIFDTLSLKAVNVIEAHRSPLCCICLNNEGTLLATASETGTIIRVFSVPKGKKLYQFRRGTYPSTIYSMSFNLSSTLLCVSSTSDTIHIFRLGAPPGNTTPAGAPIESPASQRQDRWSRARSYDDSESPGASAADSPKNEPAELNGPGAGNNQGGHTRGSGSFSSMLRRSSQIMGRGVAGVMGSYLPQSVTEMWEPLRDFAYIKIPKSAAASGASRTLRDAPGGPLRSVVAMSSSSPQVMVVTSDGGFYVYNIDMEHGGEGYLVKQFSVNHSVLEGDDKSDASGYGS.

WD repeat units follow at residues 1-39 (MTSP…RIFS) and 188-228 (AHRS…KLYQ). The interval 229–232 (FRRG) is necessary for proper localization to vacuole membrane. Residues 229–233 (FRRGT) carry the L/FRRG motif motif. One copy of the WD 3 repeat lies at 233–272 (TYPSTIYSMSFNLSSTLLCVSSTSDTIHIFRLGAPPGNTT). A disordered region spans residues 264-339 (LGAPPGNTTP…RGSGSFSSML (76 aa)). The span at 265–277 (GAPPGNTTPAGAP) shows a compositional bias: low complexity. The segment covering 285–296 (RQDRWSRARSYD) has biased composition (basic and acidic residues). Positions 319–330 (PGAGNNQGGHTR) are enriched in gly residues. The stretch at 393 to 433 (APGGPLRSVVAMSSSSPQVMVVTSDGGFYVYNIDMEHGGEG) is one WD 4 repeat.

Belongs to the WD repeat PROPPIN family. In terms of assembly, component of the PI(3,5)P2 regulatory complex. Interacts with ATG2 and ATG9. The ATG2-ATG18 complex is essential for autophagosome formation.

Its subcellular location is the preautophagosomal structure membrane. It localises to the vacuole membrane. It is found in the endosome membrane. In terms of biological role, component of the PI(3,5)P2 regulatory complex that regulates both the synthesis and turnover of phosphatidylinositol 3,5-bisphosphate (PtdIns(3,5)P2). Plays an important role in osmotically-induced vacuole fragmentation. Required for cytoplasm to vacuole transport (Cvt) vesicle formation, pexophagy and starvation-induced autophagy. Involved in correct ATG9 trafficking to the pre-autophagosomal structure. With ATG2, protects ATG8 from ATG4-mediated cleavage. Autophagy is required for proper vegetative growth, asexual/sexual reproduction, and full virulence. Autophagy is particularly involved in the biosynthesis of deoxynivalenol (DON), an important virulence determinant. In Gibberella zeae (strain ATCC MYA-4620 / CBS 123657 / FGSC 9075 / NRRL 31084 / PH-1) (Wheat head blight fungus), this protein is Autophagy-related protein 18.